Here is a 922-residue protein sequence, read N- to C-terminus: Non-centrosomal microtubule array protein 1 (922 aa).

Residues 1-10 are compositionally biased toward polar residues; sequence MSNERVSTGS. Disordered stretches follow at residues 1 to 134, 250 to 277, 465 to 491, and 533 to 563; these read MSNE…HLPP, PVRL…TVPR, KSRH…QMNL, and TQKE…SNLS. Basic and acidic residues-rich tracts occupy residues 43 to 54 and 70 to 94; these read SMERKDMPDRPK and PKDR…KECA. Residues 99 to 113 are compositionally biased toward low complexity; that stretch reads SNTSSEHSSRSNSST. Composition is skewed to basic and acidic residues over residues 256 to 276 and 468 to 484; these read RGDT…DTVP and HLSE…ERRG. Residues 539 to 563 are compositionally biased toward low complexity; that stretch reads SHSTPSQSRHSSSKSSHFNGSSNLS. Positions 564-728 form a coiled coil; the sequence is TSEQLRLQEM…RSVSTLRLEQ (165 aa).

The protein localises to the cytoplasm. It localises to the cytoskeleton. The protein resides in the apical cell membrane. It is found in the cell junction. Its subcellular location is the hemidesmosome. The protein localises to the adherens junction. Its function is as follows. Plays a role in the assembly of microtubule arrays in the germline acting redundantly with ptrn-1 to control circumferential microtubule assembly along the body which is necessary for larval development, viability, and morphology and integrity of the epidermis. Required for microtubule stability and anchorage by binding to microtubule minus ends. Recruited to hemidesomosomes in early embryonic elongation to direct the nucleation and growth of non-centrosomal microtubules. Required for normal nuclear migration in the embryonic epidermis. In terms of biological role, directs the assembly of non-centrosomal microtubule arrays that determine the position of nuclei within intracellular compartments in the epidermis and this is independent of ptrn-1 activity. The sequence is that of Non-centrosomal microtubule array protein 1 from Caenorhabditis elegans.